We begin with the raw amino-acid sequence, 154 residues long: Superoxide dismutase [Cu-Zn] (154 aa).

Residues H47, H49, and H64 each coordinate Cu cation. C58 and C147 are disulfide-bonded. The tract at residues 62–89 is disordered; sequence GPHFNPFKKNHGGPTDSERHVGDLGNVK. Zn(2+) is bound by residues H64, H72, H81, and D84. Residue H121 participates in Cu cation binding. R144 is a substrate binding site.

It belongs to the Cu-Zn superoxide dismutase family. Homodimer. It depends on Cu cation as a cofactor. Zn(2+) is required as a cofactor.

It is found in the cytoplasm. The catalysed reaction is 2 superoxide + 2 H(+) = H2O2 + O2. Destroys radicals which are normally produced within the cells and which are toxic to biological systems. The protein is Superoxide dismutase [Cu-Zn] (SOD1) of Yarrowia lipolytica (strain CLIB 122 / E 150) (Yeast).